We begin with the raw amino-acid sequence, 109 residues long: uncharacterized protein (109 aa).

Residues 90–107 (IICNFWGSLLGVGIAFYQ) traverse the membrane as a helical segment.

The protein localises to the membrane. This is an uncharacterized protein from Saccharomyces cerevisiae (strain ATCC 204508 / S288c) (Baker's yeast).